A 614-amino-acid polypeptide reads, in one-letter code: Threonine--tRNA ligase (614 aa).

Positions 1–138 are editing domain; sequence MRTLMIHSDY…HPLSELSRTI (138 aa). Residues 133–157 form a disordered region; that stretch reads ELSRTITTEPEEESEDSEEEPSEPS. The span at 141 to 154 shows a compositional bias: acidic residues; the sequence is EPEEESEDSEEEPS. A catalytic region spans residues 200–495; it reads PHVRLMREKE…TDKGNKPSLP (296 aa). Residues Cys292, His344, and His466 each coordinate Zn(2+).

Belongs to the class-II aminoacyl-tRNA synthetase family. As to quaternary structure, homodimer. Requires Zn(2+) as cofactor.

The protein resides in the cytoplasm. The enzyme catalyses tRNA(Thr) + L-threonine + ATP = L-threonyl-tRNA(Thr) + AMP + diphosphate + H(+). Catalyzes the attachment of threonine to tRNA(Thr) in a two-step reaction: L-threonine is first activated by ATP to form Thr-AMP and then transferred to the acceptor end of tRNA(Thr). Also edits incorrectly charged L-seryl-tRNA(Thr). This chain is Threonine--tRNA ligase, found in Methanosphaera stadtmanae (strain ATCC 43021 / DSM 3091 / JCM 11832 / MCB-3).